A 333-amino-acid chain; its full sequence is Putative transporter MamV (333 aa).

5 consecutive transmembrane segments (helical) span residues 19–39 (AWLD…LGVL), 86–106 (FLSA…MLWY), 111–131 (LGSG…LISA), 170–190 (VLAG…LAAI), and 191–211 (LVSL…IHGL).

The protein belongs to the cation diffusion facilitator (CDF) transporter (TC 2.A.4) family.

It localises to the cell inner membrane. In terms of biological role, expression of just the minimal mamAB gene cluster (amb0961 to amb0978), including this gene, is sufficient to form a minimal magnetosome chain with small magnetite particles. This is Putative transporter MamV from Paramagnetospirillum magneticum (strain ATCC 700264 / AMB-1) (Magnetospirillum magneticum).